Reading from the N-terminus, the 211-residue chain is Adenylate kinase (211 aa).

An ATP-binding site is contributed by 10–15 (GSGKGT). The tract at residues 30 to 59 (STGDLFRENILNSTALGQEIKKIVERGELV) is NMP. AMP is bound by residues Thr31, Arg36, 57 to 59 (ELV), 85 to 88 (GFPR), and Gln92. Positions 121–158 (GRRICKSCNNIFNIYTLTTKKNGICDVCGGDLYQREDD) are LID. ATP is bound at residue Arg122. 2 residues coordinate Zn(2+): Cys125 and Cys128. Residue 131–132 (IF) coordinates ATP. Residues Cys145 and Cys148 each coordinate Zn(2+). Arg155 and Arg166 together coordinate AMP. Val194 contributes to the ATP binding site.

It belongs to the adenylate kinase family. Monomer.

It is found in the cytoplasm. The enzyme catalyses AMP + ATP = 2 ADP. It participates in purine metabolism; AMP biosynthesis via salvage pathway; AMP from ADP: step 1/1. Its function is as follows. Catalyzes the reversible transfer of the terminal phosphate group between ATP and AMP. Plays an important role in cellular energy homeostasis and in adenine nucleotide metabolism. This Borreliella burgdorferi (strain ATCC 35210 / DSM 4680 / CIP 102532 / B31) (Borrelia burgdorferi) protein is Adenylate kinase.